We begin with the raw amino-acid sequence, 106 residues long: Large ribosomal subunit protein eL42 (106 aa).

4 residues coordinate Zn(2+): Cys12, Cys17, Cys74, and Cys77.

The protein belongs to the eukaryotic ribosomal protein eL42 family. Component of the large ribosomal subunit. Mature ribosomes consist of a small (40S) and a large (60S) subunit. The 40S subunit contains about 32 different proteins and 1 molecule of RNA (18S). The 60S subunit contains 45 different proteins and 3 molecules of RNA (25S, 5.8S and 5S). The cofactor is Zn(2+).

The protein resides in the cytoplasm. In terms of biological role, component of the ribosome, a large ribonucleoprotein complex responsible for the synthesis of proteins in the cell. The small ribosomal subunit (SSU) binds messenger RNAs (mRNAs) and translates the encoded message by selecting cognate aminoacyl-transfer RNA (tRNA) molecules. The large subunit (LSU) contains the ribosomal catalytic site termed the peptidyl transferase center (PTC), which catalyzes the formation of peptide bonds, thereby polymerizing the amino acids delivered by tRNAs into a polypeptide chain. The nascent polypeptides leave the ribosome through a tunnel in the LSU and interact with protein factors that function in enzymatic processing, targeting, and the membrane insertion of nascent chains at the exit of the ribosomal tunnel. This is Large ribosomal subunit protein eL42 (RPL44) from Candida albicans (strain SC5314 / ATCC MYA-2876) (Yeast).